Reading from the N-terminus, the 416-residue chain is Thyroid hormone receptor alpha-A (416 aa).

Polar residues predominate over residues 1-13 (MEPMSNKQDSNSS). A disordered region spans residues 1-37 (MEPMSNKQDSNSSEGDEKGWPDVPKRKRKNSQCSMKS). The segment at 1–58 (MEPMSNKQDSNSSEGDEKGWPDVPKRKRKNSQCSMKSMSALSVSVPGYIPSYLEKDEP) is modulating. The segment covering 15 to 24 (GDEKGWPDVP) has biased composition (basic and acidic residues). 2 NR C4-type zinc fingers span residues 59–79 (CVVC…CEGC) and 97–121 (CKYE…FKKC). The segment at residues 59–126 (CVVCGDKATG…RFKKCISVGM (68 aa)) is a DNA-binding region (nuclear receptor). The NR LBD domain occupies 169 to 413 (AEWELIRMAT…PPLFLEVFED (245 aa)).

This sequence belongs to the nuclear hormone receptor family. NR1 subfamily.

The protein resides in the nucleus. High affinity receptor for triiodothyronine. This chain is Thyroid hormone receptor alpha-A (thra1), found in Paralichthys olivaceus (Bastard halibut).